The sequence spans 745 residues: DEAD-box ATP-dependent RNA helicase 3A, chloroplastic (745 aa).

The transit peptide at 1–41 (MASLVTLPAIAFSNPATASGAVRLRAAAFRCWALRRRGWAV) directs the protein to the chloroplast. Residues 88-116 (LAIARLGLPDELVATLEKRGITHLFPIQR) carry the Q motif motif. Residues 119–295 (LIPALGGRDL…RRYLNNPLTI (177 aa)) form the Helicase ATP-binding domain. 132 to 139 (AKTGTGKT) serves as a coordination point for ATP. The DEAD box motif lies at 243–246 (DEAD). One can recognise a Helicase C-terminal domain in the interval 324–469 (ILSDLITVYA…ISPPSIEEVL (146 aa)). The segment at 606-724 (LTKISKLPAL…SLGGRESSRS (119 aa)) is disordered. The span at 641–650 (GGGASRGRGG) shows a compositional bias: gly residues. The segment covering 656-670 (EDRYRRGGRSLRSDN) has biased composition (basic and acidic residues). The span at 687-724 (RSSSSFGGRSSSYGSRGSPSPSFGVRSSSLGGRESSRS) shows a compositional bias: low complexity. A CCHC-type zinc finger spans residues 727 to 744 (GACFNCGESGHRASDCPN).

Belongs to the DEAD box helicase family. DDX21/DDX50 subfamily.

The protein resides in the plastid. The protein localises to the chloroplast. It catalyses the reaction ATP + H2O = ADP + phosphate + H(+). Nuclear genome-encoded factor involved in ribosome biogenesis in chloroplasts. Binds specific group II introns in chloroplasts and facilitates their splicing. Required for normal development of chloroplasts. This chain is DEAD-box ATP-dependent RNA helicase 3A, chloroplastic, found in Zea mays (Maize).